Consider the following 545-residue polypeptide: Capsular polysaccharide phosphotransferase SacB (545 aa).

The protein belongs to the stealth family.

Functionally, may be the polymerase that links individual UDP-N-acetyl-D-mannosamine monomers. In serotype A the capsule is composed of repeated units of (alpha 1-6)-linked N-acetyl-D-mannosamine-1-phosphate. This is Capsular polysaccharide phosphotransferase SacB (sacB) from Neisseria meningitidis serogroup A.